Here is a 95-residue protein sequence, read N- to C-terminus: uncharacterized protein (95 aa).

A signal peptide spans 1-19 (MAILMLSLQLILLLIPSIS). Residues asparagine 38 and asparagine 41 are each glycosylated (N-linked (GlcNAc...) asparagine).

The protein resides in the secreted. This is an uncharacterized protein from Homo sapiens (Human).